The following is a 232-amino-acid chain: TIR domain-containing adapter molecule 2 (232 aa).

The span at 1–10 (MGIGKSKMDP) shows a compositional bias: basic and acidic residues. The segment at 1–71 (MGIGKSKMDP…VEERPEEDTE (71 aa)) is disordered. G2 carries N-myristoyl glycine lipidation. Residues 19–29 (KSQSVDTSQSH) are compositionally biased toward polar residues. Residues 30 to 42 (HMSDSKQSEEISL) show a composition bias toward basic and acidic residues. Residues 55–71 (PAEEQEGVEERPEEDTE) show a composition bias toward acidic residues. Residues 70-226 (TEEEVFLKFV…AIWKETRNTV (157 aa)) form the TIR domain. A Phosphotyrosine modification is found at Y164.

In terms of assembly, homodimer. Interacts with TLR4, TICAM1, IRF3 and IRF7 in response to LPS. Interacts with IL1R1, IL1RAP, IRAK2, IRAK3 and TRAF6. Interacts with protein kinase-inactive mutants of IRAK1 and IRAK4. Isoform 1 interacts with isoform 2; the interaction occurs in late endosomes and disrupts the interaction between isoform 1 and TICAM1. Interacts with MYD88; the interaction decreases after IL-18 stimulation in a time-dependent manner. Interacts with IL18R1 and IL18RAP. Interacts with TLR2. Interacts with RAB11FIP2. Myristoylated. Required for membrane association which is critical for its ability to initiate efficient signaling. Post-translationally, phosphorylated by PRKCE in response to LPS. Phosphorylation is essential for its function. It is depleted from the membrane upon phosphorylation. Tyrosine phosphorylation is inhibited by phosphatase PTPN4.

The protein resides in the cytoplasm. The protein localises to the golgi apparatus. It localises to the cell membrane. Its subcellular location is the endoplasmic reticulum. It is found in the early endosome. The protein resides in the late endosome. The protein localises to the cell projection. It localises to the phagocytic cup. Functionally, functions as a sorting adapter in different signaling pathways to facilitate downstream signaling leading to type I interferon induction. In TLR4 signaling, physically bridges TLR4 and TICAM1 and functionally transmits signal to TICAM1 in early endosomes after endocytosis of TLR4. In TLR2 signaling, physically bridges TLR2 and MYD88 and is required for the TLR2-dependent movement of MYD88 to endosomes following ligand engagement. Involved in IL-18 signaling and is proposed to function as a sorting adapter for MYD88 in IL-18 signaling during adaptive immune response. Forms a complex with RAB11FIP2 that is recruited to the phagosomes to promote the activation of the actin-regulatory GTPases RAC1 and CDC42 and subsequent phagocytosis of Gram-negative bacteria. The protein is TIR domain-containing adapter molecule 2 (TICAM2) of Bos taurus (Bovine).